A 464-amino-acid polypeptide reads, in one-letter code: 3-isopropylmalate dehydratase large subunit (464 aa).

The [4Fe-4S] cluster site is built by cysteine 337, cysteine 397, and cysteine 400.

It belongs to the aconitase/IPM isomerase family. LeuC type 1 subfamily. As to quaternary structure, heterodimer of LeuC and LeuD. It depends on [4Fe-4S] cluster as a cofactor.

The enzyme catalyses (2R,3S)-3-isopropylmalate = (2S)-2-isopropylmalate. The protein operates within amino-acid biosynthesis; L-leucine biosynthesis; L-leucine from 3-methyl-2-oxobutanoate: step 2/4. Catalyzes the isomerization between 2-isopropylmalate and 3-isopropylmalate, via the formation of 2-isopropylmaleate. The polypeptide is 3-isopropylmalate dehydratase large subunit (Bacillus cereus (strain 03BB102)).